The chain runs to 123 residues: Ribosome-binding factor A (123 aa).

This sequence belongs to the RbfA family. Monomer. Binds 30S ribosomal subunits, but not 50S ribosomal subunits or 70S ribosomes.

The protein localises to the cytoplasm. In terms of biological role, one of several proteins that assist in the late maturation steps of the functional core of the 30S ribosomal subunit. Associates with free 30S ribosomal subunits (but not with 30S subunits that are part of 70S ribosomes or polysomes). Required for efficient processing of 16S rRNA. May interact with the 5'-terminal helix region of 16S rRNA. The chain is Ribosome-binding factor A from Legionella pneumophila (strain Lens).